We begin with the raw amino-acid sequence, 343 residues long: Interferon-inducible protein AIM2 (343 aa).

The region spanning 1 to 87 (MESKYKEILL…AKRLQEEKEK (87 aa)) is the Pyrin domain. The 200-residue stretch at 138-337 (MVAQQESIRE…SGVHSTIKVI (200 aa)) folds into the HIN-200 domain.

This sequence belongs to the HIN-200 family. As to quaternary structure, self-associates; forms homooligomers in response to cytosolic double-stranded DNA (dsDNA) and the dsDNA seems to serve as oligomerization platform. Component of AIM2 inflammasome, which consists of a signal sensor component (AIM2), an adapter (PYCARD/ASC), which recruits an effector pro-inflammatory caspase (CASP1). Interacts (via pyrin domain) with PYCARD/ASC (via pyrin domain); interaction is direct. Component of the AIM2 PANoptosome complex, a multiprotein complex that drives inflammatory cell death (PANoptosis). Interacts with PYDC5; disrupts assembly of the AIM2 inflammasome complex. Interacts with EIF2AK2/PKR. Interacts with MAPRE1. Interacts with IFI16. Interacts with isoform IFI16-beta of IFI16; preventing the interaction between AIM2 and PYCARD/ASC. Interacts with RACK1; promoting association with PP2A phosphatase and dephosphorylation of AKT1. Interacts with TRIM11; promoting AIM2 recruitment to autophagosomes and autophagy-dependent degradation. In terms of assembly, (Microbial infection) Interacts with human herpesvirus 8 protein SOX/ORF37; this interaction inhibits AIM2 polymerization and subsequent inflammasome activation. Post-translationally, degraded via selective autophagy following interaction with TRIM11. As to expression, expressed in spleen, small intestine, peripheral blood leukocytes, and testis.

Its subcellular location is the cytoplasm. It localises to the inflammasome. The protein localises to the nucleus. Inactive in absence of double-stranded DNA (dsDNA). Homooligomerizes upon binding to dsDNA, dsDNA serving as an oligomerization platform. AIM2 requires large dsDNA to generate a structural template that couples dsDNA ligand-binding and homooligomerization. Homooligomerization is followed by recruitment of PYCARD/ASC to initiate speck formation (nucleation). AIM2 and PYCARD/ASC homooligomer filaments assemble bidirectionally and the recognition between AIM2 and PYCARD/ASC oligomers occurs in a head-to-tail manner. Clustered PYCARD/ASC nucleates the formation of CASP1 filaments through the interaction of their respective CARD domains, acting as a platform for CASP1 polymerization and activation. Active CASP1 then specifically processes protein precursors, such as gasdermin-D (GSDMD), IL1B and IL18, leading to the release of mature cytokines in the extracellular milieu or pyroptosis, depending on cell type. AIM2 can be activated in response to events that cause genomic DNA (HIV protease inhibitor nelfinavir) or mitochondrial DNA release in the cytoplasm (such as Perfluoroalkyl substance pollutants or cholesterol overload). Activation of the AIM2 inflammasome is inhibited by isoform IFI16-beta of IFI16, which prevents the interaction between AIM2 and PYCARD/ASC. Activation of the AIM2 inflammasome is inhibited by TRIM11, which promotes autophagy-dependent degradation of AIM2. In terms of biological role, sensor component of the AIM2 inflammasome, which mediates inflammasome activation in response to the presence of double-stranded DNA (dsDNA) in the cytosol, leading to subsequent pyroptosis. Inflammasomes are supramolecular complexes that assemble in the cytosol in response to pathogens and other damage-associated signals and play critical roles in innate immunity and inflammation. Acts as a recognition receptor (PRR): specifically recognizes and binds dsDNA in the cytosol, and mediates the formation of the inflammasome polymeric complex composed of AIM2, CASP1 and PYCARD/ASC. Recruitment of pro-caspase-1 (proCASP1) to the AIM2 inflammasome promotes caspase-1 (CASP1) activation, which subsequently cleaves and activates inflammatory cytokines IL1B and IL18 and gasdermin-D (GSDMD), promoting cytokine secretion. In some cells, CASP1 activation mediates cleavage and activation of GSDMD, triggering pyroptosis without promoting cytokine secretion. Detects cytosolic dsDNA of viral and bacterial origin in a non-sequence-specific manner. Involved in the DNA damage response caused by acute ionizing radiation by mediating pyroptosis of intestinal epithelial cells and bone marrow cells in response to double-strand DNA breaks. Mechanistically, AIM2 senses DNA damage in the nucleus to mediate inflammasome assembly and inflammatory cell death. Also acts as a regulator of neurodevelopment via its role in the DNA damage response: acts by promoting neural cell death in response to DNA damage in the developing brain, thereby purging genetically compromised cells of the central nervous system. Pyroptosis mediated by the AIM2 inflammasome in response to DNA damage is dependent on GSDMD without involving IL1B and IL18 cytokine secretion. Also acts as a mediator of pyroptosis, necroptosis and apoptosis (PANoptosis), an integral part of host defense against pathogens, in response to bacterial infection. Can also trigger PYCARD/ASC-dependent, caspase-1-independent cell death that involves caspase-8 (CASP8). Its function is as follows. Also acts as a tumor suppressor independently of its role in inflammatory response. Able to suppress overt cell proliferation in enterocytes: restricts stem cell proliferation in the intestinal mucosa in an inflammasome-independent manner, contributing to a decrease in the likelihood of colorectal cancer development. AIM2 suppresses cell proliferation by inhibiting phosphorylation of AKT1 at 'Ser-473', preventing AKT1 activation and AKT-mTOR signaling pathway. Inhibits AKT1 phosphorylation both by inhibiting the activity of PRKDC/DNA-PK kinase and promoting dephosphorylation by PP2A phosphatase. Also acts as a key regulator of regulatory T-cells (Treg) homeostasis by promoting their stability: acts by preventing AKT1 activation. Its role in Treg homeostasis is important to restain autoimmune diseases. The protein is Interferon-inducible protein AIM2 of Homo sapiens (Human).